Reading from the N-terminus, the 611-residue chain is Chaperone protein DnaK (611 aa).

T173 carries the post-translational modification Phosphothreonine; by autocatalysis. The span at 579–592 (AAGQAEGAQGAQDA) shows a compositional bias: low complexity. The segment at 579–598 (AAGQAEGAQGAQDAGAKKDN) is disordered.

It belongs to the heat shock protein 70 family.

Functionally, acts as a chaperone. The chain is Chaperone protein DnaK from Bacillus cereus (strain B4264).